Reading from the N-terminus, the 609-residue chain is UvrABC system protein C (609 aa).

Positions 16 to 94 (SSAGVYRMYD…IKQYMPKYNV (79 aa)) constitute a GIY-YIG domain. The UVR domain occupies 203-238 (QQVISALVDKMELAAERQAYEQAARFRDQIMALRKV).

This sequence belongs to the UvrC family. As to quaternary structure, interacts with UvrB in an incision complex.

It localises to the cytoplasm. Its function is as follows. The UvrABC repair system catalyzes the recognition and processing of DNA lesions. UvrC both incises the 5' and 3' sides of the lesion. The N-terminal half is responsible for the 3' incision and the C-terminal half is responsible for the 5' incision. The polypeptide is UvrABC system protein C (Shewanella baltica (strain OS195)).